Consider the following 462-residue polypeptide: 3-isopropylmalate dehydratase large subunit (462 aa).

C337, C397, and C400 together coordinate [4Fe-4S] cluster.

The protein belongs to the aconitase/IPM isomerase family. LeuC type 1 subfamily. In terms of assembly, heterodimer of LeuC and LeuD. [4Fe-4S] cluster serves as cofactor.

The enzyme catalyses (2R,3S)-3-isopropylmalate = (2S)-2-isopropylmalate. Its pathway is amino-acid biosynthesis; L-leucine biosynthesis; L-leucine from 3-methyl-2-oxobutanoate: step 2/4. In terms of biological role, catalyzes the isomerization between 2-isopropylmalate and 3-isopropylmalate, via the formation of 2-isopropylmaleate. The sequence is that of 3-isopropylmalate dehydratase large subunit from Listeria welshimeri serovar 6b (strain ATCC 35897 / DSM 20650 / CCUG 15529 / CIP 8149 / NCTC 11857 / SLCC 5334 / V8).